We begin with the raw amino-acid sequence, 212 residues long: Uridine kinase (212 aa).

Residue 13 to 20 (GASASGKS) participates in ATP binding.

Belongs to the uridine kinase family.

It localises to the cytoplasm. The enzyme catalyses uridine + ATP = UMP + ADP + H(+). The catalysed reaction is cytidine + ATP = CMP + ADP + H(+). Its pathway is pyrimidine metabolism; CTP biosynthesis via salvage pathway; CTP from cytidine: step 1/3. It functions in the pathway pyrimidine metabolism; UMP biosynthesis via salvage pathway; UMP from uridine: step 1/1. The chain is Uridine kinase from Psychromonas ingrahamii (strain DSM 17664 / CCUG 51855 / 37).